Consider the following 187-residue polypeptide: MANYSTSEFKSGLKILMDGDPYAIIENEFVKPGKGQAFNRVKVRNLKTGRVLEKTFKSGDSVEAADVMDTNMQYLYTDGEFWHFMVPDTFEQHAAGEAAVADAIKWLKEQDMCVVTLWNGVPLAVSPPNFVELTITQCDPGVRGDTAQGGTKPATLETGAVVKVPLFVEEGEKVRVDTRTGEYVSRV.

The residue at position 34 (K34) is an N6-(3,6-diaminohexanoyl)-5-hydroxylysine.

The protein belongs to the elongation factor P family. Post-translationally, may be beta-lysylated on the epsilon-amino group of Lys-34 by the combined action of EpmA and EpmB, and then hydroxylated on the C5 position of the same residue by EpmC (if this protein is present). Lysylation is critical for the stimulatory effect of EF-P on peptide-bond formation. The lysylation moiety may extend toward the peptidyltransferase center and stabilize the terminal 3-CCA end of the tRNA. Hydroxylation of the C5 position on Lys-34 may allow additional potential stabilizing hydrogen-bond interactions with the P-tRNA.

It is found in the cytoplasm. It functions in the pathway protein biosynthesis; polypeptide chain elongation. Functionally, involved in peptide bond synthesis. Alleviates ribosome stalling that occurs when 3 or more consecutive Pro residues or the sequence PPG is present in a protein, possibly by augmenting the peptidyl transferase activity of the ribosome. Modification of Lys-34 is required for alleviation. The sequence is that of Elongation factor P from Thioalkalivibrio sulfidiphilus (strain HL-EbGR7).